The primary structure comprises 700 residues: Methionine--tRNA ligase (700 aa).

A 'HIGH' region motif is present at residues 13 to 23 (PYANGDIHLGH). Positions 144, 147, 157, and 160 each coordinate Zn(2+). Residues 341–345 (KMSKS) carry the 'KMSKS' region motif. Lys-344 is an ATP binding site. Residues 598–700 (DFAKVEMKVA…DNCVIGDLLA (103 aa)) enclose the tRNA-binding domain.

Belongs to the class-I aminoacyl-tRNA synthetase family. MetG type 1 subfamily. In terms of assembly, homodimer. Zn(2+) serves as cofactor.

The protein localises to the cytoplasm. The enzyme catalyses tRNA(Met) + L-methionine + ATP = L-methionyl-tRNA(Met) + AMP + diphosphate. In terms of biological role, is required not only for elongation of protein synthesis but also for the initiation of all mRNA translation through initiator tRNA(fMet) aminoacylation. This chain is Methionine--tRNA ligase, found in Psychrobacter arcticus (strain DSM 17307 / VKM B-2377 / 273-4).